The sequence spans 235 residues: UPF0758 protein A1S_2918 (235 aa).

Residues 1–20 (MNTSIKNWPEQERPRERLLQ) are disordered. Residues 9-18 (PEQERPRERL) are compositionally biased toward basic and acidic residues. The MPN domain maps to 105–227 (SLHSSHLVLD…SFSFAEQQLL (123 aa)). Zn(2+) contacts are provided by His-176, His-178, and Asp-189. The short motif at 176-189 (HNHPFGSPQPSPED) is the JAMM motif element.

It belongs to the UPF0758 family.

The protein is UPF0758 protein A1S_2918 of Acinetobacter baumannii (strain ATCC 17978 / DSM 105126 / CIP 53.77 / LMG 1025 / NCDC KC755 / 5377).